The primary structure comprises 208 residues: Imidazoleglycerol-phosphate dehydratase (208 aa).

The tract at residues 1–22 (MTRRAAVKAPRAGAAARRGSVA) is disordered. The span at 7-19 (VKAPRAGAAARRG) shows a compositional bias: low complexity.

The protein belongs to the imidazoleglycerol-phosphate dehydratase family.

The protein localises to the cytoplasm. The catalysed reaction is D-erythro-1-(imidazol-4-yl)glycerol 3-phosphate = 3-(imidazol-4-yl)-2-oxopropyl phosphate + H2O. The protein operates within amino-acid biosynthesis; L-histidine biosynthesis; L-histidine from 5-phospho-alpha-D-ribose 1-diphosphate: step 6/9. The sequence is that of Imidazoleglycerol-phosphate dehydratase from Anaeromyxobacter dehalogenans (strain 2CP-C).